A 105-amino-acid chain; its full sequence is uncharacterized protein (105 aa).

This is an uncharacterized protein from Rickettsia prowazekii (strain Madrid E).